The following is an 876-amino-acid chain: MSSGYKPDILWSPHHADRYVICDTELSLYRIGPSGSSETKAGALQLSEETAATLLAINSDTPFMKCVAWYPKHEPECLLAVGHTNGRVVLTSLGQSHNSKSKDLAGKEFVPKHARQCNTLAWNPVDSNWLAAGLDKHRADFSVLIWDISSKFSPEAVPAEKVRLSGDADSGLLVTKPLYELGQNDACLSLCWLPRDHQKLLLAGMHRNLAIFDLRNTSQKTFVNTKAIQGVTVDPHFQDRVASYFEGQVAIWDLRKFEKPVFTLNEQPKPLTKVAWCPTRMGLLATLTRDSNIIRLYDMQHTPMPFGDEVEPTIMERGVQPCSESIISSFAWHPSAQNRMVVVSPSRVMNDFTLFERISLAWSSTTSLMWACGRHLYECAEDSGQAAEAEKDIATKMRERAQSRYGHDTVQVWRNHVLAGGDDPQLRSLWYTLHFMKQYTENVEQKQQSNKQSLIYSGIKNIVKSSSGTTETRRCWSGSDRQTDVPRFHSEERSLALQLCGWISQGPDTDVEPFLKSLEQEGEWERAAAVALFNLDIRRAIQILNKGASSEKGDLNLNVVAMALSGYTDEKNSLWREMCSSLRLQLKKPYLCIMFAFLTSEPGAYDGVLYESRVAVRDRVAFACMFLNDAQLPRYIDKLTNEMKEAGNLEGILLTGLTKDGVDLMESYVDRTGDVQTASFCMLKGSPGEVLKDPRVQCWIENYRNLLDAWRFWHKRAEFDIHRSKLDPSSKPLAQVFVSCNFCGKSISYSCSAMPHQGRGFSQYGVSGSPTKSKVTSCPGCRKPLPRCALCLMNMGTPVSSCPGTGKADEKADLTRDKKLAQFNNWFTWCHNCRHGGHAGHMLSWFRDHSECPVSACTCKCMQLDTTGNLVPSDSV.

WD repeat units follow at residues Ser-59 to Ser-101, Lys-112 to Ala-156, Gly-182 to Phe-222, Asn-224 to Phe-262, Glu-266 to Gly-307, and Arg-400 to Thr-440. The C4-type zinc finger occupies Val-738 to Pro-784. Residues Cys-740, Cys-743, Cys-778, Cys-781, Cys-791, Cys-830, Cys-833, His-835, His-838, His-841, Cys-852, Cys-857, and Cys-861 each contribute to the Zn(2+) site. The RING-type; atypical zinc finger occupies Leu-785 to Thr-866.

It belongs to the WD repeat mio family. Component of the GATOR2 subcomplex, composed of MIOS, SEC13, SEH1L, WDR24 and WDR59. The GATOR2 complex interacts with CASTOR1 and CASTOR2; the interaction is negatively regulated by arginine. The GATOR2 complex interacts with SESN1, SESN2 and SESN3; the interaction is negatively regulated by amino acids. Interacts with SAR1; the interaction is direct, disrupted by leucine and mediates the interaction of SAR1 with the GATOR2 complex to negatively regulate the TORC1 signaling upon leucine deprivation.

The protein localises to the lysosome membrane. The GATOR2 complex is negatively regulated by the upstream amino acid sensors CASTOR1 and SESN2, which sequester the GATOR2 complex in absence of amino acids. In the presence of abundant amino acids, GATOR2 is released from CASTOR1 and SESN2 and activated. Its function is as follows. As a component of the GATOR2 complex, functions as an activator of the amino acid-sensing branch of the mTORC1 signaling pathway. The GATOR2 complex indirectly activates mTORC1 through the inhibition of the GATOR1 subcomplex. GATOR2 probably acts as an E3 ubiquitin-protein ligase toward GATOR1. In the presence of abundant amino acids, the GATOR2 complex mediates ubiquitination of the NPRL2 core component of the GATOR1 complex, leading to GATOR1 inactivation. In the absence of amino acids, GATOR2 is inhibited, activating the GATOR1 complex. Within the GATOR2 complex, MIOS is required to prevent autoubiquitination of WDR24, the catalytic subunit of the complex. This chain is GATOR2 complex protein MIOS, found in Danio rerio (Zebrafish).